The primary structure comprises 318 residues: Methionyl-tRNA formyltransferase (318 aa).

Residue 112-115 (SILP) participates in (6S)-5,6,7,8-tetrahydrofolate binding.

The protein belongs to the Fmt family.

It catalyses the reaction L-methionyl-tRNA(fMet) + (6R)-10-formyltetrahydrofolate = N-formyl-L-methionyl-tRNA(fMet) + (6S)-5,6,7,8-tetrahydrofolate + H(+). Attaches a formyl group to the free amino group of methionyl-tRNA(fMet). The formyl group appears to play a dual role in the initiator identity of N-formylmethionyl-tRNA by promoting its recognition by IF2 and preventing the misappropriation of this tRNA by the elongation apparatus. The sequence is that of Methionyl-tRNA formyltransferase from Shewanella oneidensis (strain ATCC 700550 / JCM 31522 / CIP 106686 / LMG 19005 / NCIMB 14063 / MR-1).